Reading from the N-terminus, the 755-residue chain is Actin-related protein 5 (755 aa).

Ser7 carries the phosphoserine modification. A Glycyl lysine isopeptide (Lys-Gly) (interchain with G-Cter in ubiquitin) cross-link involves residue Lys12. Thr24 is subject to Phosphothreonine. At Ser383 the chain carries Phosphoserine. Positions Gln418–Glu444 are disordered. The span at Gln425–Glu444 shows a compositional bias: basic and acidic residues.

The protein belongs to the actin family. As to quaternary structure, component of the chromatin-remodeling INO80 complex, at least composed of ARP4, ARP5, ARP8, RVB1, RVB2, TAF14, NHP10, IES1, IES3, IES4, IES6, ACT1, IES2, IES5 and INO80.

The protein resides in the nucleus. Functionally, probably involved in transcription regulation via its interaction with the INO80 complex, a chromatin remodeling complex. The sequence is that of Actin-related protein 5 (ARP5) from Saccharomyces cerevisiae (strain ATCC 204508 / S288c) (Baker's yeast).